Consider the following 308-residue polypeptide: MQEKITQFENFLAQLQQKITSTLEQSETSSAKFISDKWQKPDTPEQKLKGYGNSMIIEGGEIFEKGVVAFSRVHGDALPPSATAKRQELAGKSFIATGVSLVIHPRNPFVPTSHANFRIFVAGADTDNPIWWFGGGFDLTPYYPFEEDAIHWHQTAKNICDKHDASYYPSFKKLCDEYFYLKHRDECRGVGGLFFDDLNDKSFDECFKFVTDCANSYLDAYIPIVEKRKNIEYSQKHKDFQLYRRGRYVEFNLVFDRGTIFGLQSGGRTESILSSMPPMATWKYNWQPEPGSEEEKVYEYIKPRDWIK.

S100 is a substrate binding site. A divalent metal cation is bound by residues H104 and H114. H114 (proton donor) is an active-site residue. A substrate-binding site is contributed by 116 to 118; that stretch reads NFR. Residues H153 and H183 each contribute to the a divalent metal cation site. Residues 248–283 form an important for dimerization region; it reads YVEFNLVFDRGTIFGLQSGGRTESILSSMPPMATWK. 266 to 268 contributes to the substrate binding site; it reads GGR.

This sequence belongs to the aerobic coproporphyrinogen-III oxidase family. In terms of assembly, homodimer. It depends on a divalent metal cation as a cofactor.

It localises to the cytoplasm. The catalysed reaction is coproporphyrinogen III + O2 + 2 H(+) = protoporphyrinogen IX + 2 CO2 + 2 H2O. The protein operates within porphyrin-containing compound metabolism; protoporphyrin-IX biosynthesis; protoporphyrinogen-IX from coproporphyrinogen-III (O2 route): step 1/1. Its function is as follows. Involved in the heme biosynthesis. Catalyzes the aerobic oxidative decarboxylation of propionate groups of rings A and B of coproporphyrinogen-III to yield the vinyl groups in protoporphyrinogen-IX. This Francisella philomiragia subsp. philomiragia (strain ATCC 25017 / CCUG 19701 / FSC 153 / O#319-036) protein is Oxygen-dependent coproporphyrinogen-III oxidase.